A 284-amino-acid polypeptide reads, in one-letter code: Pantothenate synthetase (284 aa).

Residue 30–37 (MGNLHDGH) coordinates ATP. Histidine 37 acts as the Proton donor in catalysis. Glutamine 61 contacts (R)-pantoate. Residue glutamine 61 coordinates beta-alanine. Residue 149–152 (GEKD) participates in ATP binding. (R)-pantoate is bound at residue glutamine 155. ATP is bound by residues valine 178 and 186-189 (LSSR).

This sequence belongs to the pantothenate synthetase family. In terms of assembly, homodimer.

The protein localises to the cytoplasm. The enzyme catalyses (R)-pantoate + beta-alanine + ATP = (R)-pantothenate + AMP + diphosphate + H(+). The protein operates within cofactor biosynthesis; (R)-pantothenate biosynthesis; (R)-pantothenate from (R)-pantoate and beta-alanine: step 1/1. Catalyzes the condensation of pantoate with beta-alanine in an ATP-dependent reaction via a pantoyl-adenylate intermediate. The sequence is that of Pantothenate synthetase from Enterobacter sp. (strain 638).